Reading from the N-terminus, the 678-residue chain is MTKNLLVELGLEELPAYVVTPSEKQLGEKMAAFLKGKRLSFEAIQTFSTPRRLAVRVTGLADKQSDLTEDFKGPAKKIALDSDGNFTKAAQGFVRGKGLTVEDIEFREIKGEEYVYVTKEEIGQAVEAIVPGIVDVLKSLTFPVSMHWAGNSFEYIRPVHTLTVLLDEQEFDLDFLDIKGSRVSRGHRFLGQETKIQSALSYEEDLRKQFVIADPCEREQMIVDQIKEIEAKHGVRIEIDADLLNEVLNLVEYPTAFMGSFDAKYLEVPEEVLVTSMKEHQRYFVVRDQDGKLLPNFISVRNGNAERLKNVIKGNEKVLVARLEDGEFFWREDQKLVISDLVEKLNNVTFHEKIGSLREHMIRTGQITVLLAEKASLSVDETVDLARAAAIYKFDLLTGMVGEFDELQGIMGEKYTLLAGETPAVAAAIREHYMPTSAEGELPESKVGAVLAIADKLDTILSFFSVGLIPSGSNDPYALRRATQGVVRILDAFGWHIAMDELIDSLYALKFDSLTYENKAEVMDFIKARVDKMMGSTPKDIKEAVLAGSNFVVADMLEAASALVEVSKEEDFKPSVESLSRAFNLAEKAEGVATVDSALFENDQEKALAEAVETLILSGPASQQLKQLFALSPVIDAFFENTMVMAEDQAVRQNRLAILSQLTKKAAKFACFNQINTK.

The protein belongs to the class-II aminoacyl-tRNA synthetase family. In terms of assembly, tetramer of two alpha and two beta subunits.

The protein resides in the cytoplasm. The enzyme catalyses tRNA(Gly) + glycine + ATP = glycyl-tRNA(Gly) + AMP + diphosphate. This is Glycine--tRNA ligase beta subunit from Streptococcus pneumoniae (strain ATCC 700669 / Spain 23F-1).